The primary structure comprises 431 residues: Enolase (431 aa).

Q163 lines the (2R)-2-phosphoglycerate pocket. The active-site Proton donor is E205. The Mg(2+) site is built by D242, E288, and D315. (2R)-2-phosphoglycerate contacts are provided by K340, R369, S370, and K391. K340 functions as the Proton acceptor in the catalytic mechanism.

It belongs to the enolase family. The cofactor is Mg(2+).

Its subcellular location is the cytoplasm. It localises to the secreted. The protein localises to the cell surface. The enzyme catalyses (2R)-2-phosphoglycerate = phosphoenolpyruvate + H2O. The protein operates within carbohydrate degradation; glycolysis; pyruvate from D-glyceraldehyde 3-phosphate: step 4/5. In terms of biological role, catalyzes the reversible conversion of 2-phosphoglycerate (2-PG) into phosphoenolpyruvate (PEP). It is essential for the degradation of carbohydrates via glycolysis. In Acholeplasma laidlawii (strain PG-8A), this protein is Enolase.